Here is a 363-residue protein sequence, read N- to C-terminus: NAD(P)H-quinone oxidoreductase subunit 1, chloroplastic (363 aa).

6 helical membrane passes run 27–47 (VWLLIPIFILVLGIVIGVLVI), 104–124 (IAVIAILLSYLVIPFGYHLVL), 127–147 (LSIGVFLWIAISSIAPIGLLM), 248–268 (YSGIKFGLFYVASYLNLLVSS), 300–320 (VFGMTIGIFITLAKAYLFLFI), and 343–363 (FLLPISLGNLLLTTSFQLFSL).

The protein belongs to the complex I subunit 1 family. In terms of assembly, NDH is composed of at least 16 different subunits, 5 of which are encoded in the nucleus.

The protein resides in the plastid. It localises to the chloroplast thylakoid membrane. The enzyme catalyses a plastoquinone + NADH + (n+1) H(+)(in) = a plastoquinol + NAD(+) + n H(+)(out). It carries out the reaction a plastoquinone + NADPH + (n+1) H(+)(in) = a plastoquinol + NADP(+) + n H(+)(out). NDH shuttles electrons from NAD(P)H:plastoquinone, via FMN and iron-sulfur (Fe-S) centers, to quinones in the photosynthetic chain and possibly in a chloroplast respiratory chain. The immediate electron acceptor for the enzyme in this species is believed to be plastoquinone. Couples the redox reaction to proton translocation, and thus conserves the redox energy in a proton gradient. The polypeptide is NAD(P)H-quinone oxidoreductase subunit 1, chloroplastic (Ranunculus macranthus (Large buttercup)).